Here is a 380-residue protein sequence, read N- to C-terminus: Cytochrome b (380 aa).

The next 4 helical transmembrane spans lie at 34 to 54 (FGSL…LLAM), 78 to 99 (WLIR…YLHI), 114 to 134 (WNTG…GYVL), and 179 to 199 (FFAL…IHLT). Residues His84 and His98 each contribute to the heme b site. Residues His183 and His197 each coordinate heme b. A ubiquinone is bound at residue His202. 4 helical membrane-spanning segments follow: residues 227-247 (LKDI…ALFS), 289-309 (LGGV…PFLH), 321-341 (LSQL…WVGS), and 348-368 (FIII…ILFP).

The protein belongs to the cytochrome b family. As to quaternary structure, the cytochrome bc1 complex contains 11 subunits: 3 respiratory subunits (MT-CYB, CYC1 and UQCRFS1), 2 core proteins (UQCRC1 and UQCRC2) and 6 low-molecular weight proteins (UQCRH/QCR6, UQCRB/QCR7, UQCRQ/QCR8, UQCR10/QCR9, UQCR11/QCR10 and a cleavage product of UQCRFS1). This cytochrome bc1 complex then forms a dimer. Heme b serves as cofactor.

Its subcellular location is the mitochondrion inner membrane. In terms of biological role, component of the ubiquinol-cytochrome c reductase complex (complex III or cytochrome b-c1 complex) that is part of the mitochondrial respiratory chain. The b-c1 complex mediates electron transfer from ubiquinol to cytochrome c. Contributes to the generation of a proton gradient across the mitochondrial membrane that is then used for ATP synthesis. In Macronectes halli (Hall's giant petrel), this protein is Cytochrome b (MT-CYB).